A 342-amino-acid chain; its full sequence is Mitochondrial sorting homolog (342 aa).

At 1 to 6 the chain is on the mitochondrial intermembrane side; sequence MTDRNE. Residues 7–25 traverse the membrane as a helical segment; that stretch reads LIGVAIRVVAAAAVSFLSV. Residues 26-342 are Cytoplasmic-facing; it reads RYLVKYLDPN…AHLLVEETLD (317 aa). 124–131 lines the ATP pocket; the sequence is GPPGCGKT.

Belongs to the AAA ATPase family.

It localises to the mitochondrion outer membrane. Functionally, involved in intramitochondrial sorting of proteins. The chain is Mitochondrial sorting homolog (mspn-1) from Caenorhabditis elegans.